The primary structure comprises 429 residues: Histidine--tRNA ligase (429 aa).

It belongs to the class-II aminoacyl-tRNA synthetase family. Homodimer.

It is found in the cytoplasm. The catalysed reaction is tRNA(His) + L-histidine + ATP = L-histidyl-tRNA(His) + AMP + diphosphate + H(+). This is Histidine--tRNA ligase from Escherichia fergusonii (strain ATCC 35469 / DSM 13698 / CCUG 18766 / IAM 14443 / JCM 21226 / LMG 7866 / NBRC 102419 / NCTC 12128 / CDC 0568-73).